The sequence spans 148 residues: Large ribosomal subunit protein uL13 (148 aa).

Belongs to the universal ribosomal protein uL13 family. Part of the 50S ribosomal subunit.

In terms of biological role, this protein is one of the early assembly proteins of the 50S ribosomal subunit, although it is not seen to bind rRNA by itself. It is important during the early stages of 50S assembly. This Ureaplasma urealyticum serovar 10 (strain ATCC 33699 / Western) protein is Large ribosomal subunit protein uL13.